The primary structure comprises 258 residues: Thiazole synthase (258 aa).

Lysine 97 functions as the Schiff-base intermediate with DXP in the catalytic mechanism. Residues glycine 158, alanine 184–glycine 185, and asparagine 206–threonine 207 each bind 1-deoxy-D-xylulose 5-phosphate.

Belongs to the ThiG family. As to quaternary structure, homotetramer. Forms heterodimers with either ThiH or ThiS.

Its subcellular location is the cytoplasm. It catalyses the reaction [ThiS sulfur-carrier protein]-C-terminal-Gly-aminoethanethioate + 2-iminoacetate + 1-deoxy-D-xylulose 5-phosphate = [ThiS sulfur-carrier protein]-C-terminal Gly-Gly + 2-[(2R,5Z)-2-carboxy-4-methylthiazol-5(2H)-ylidene]ethyl phosphate + 2 H2O + H(+). It participates in cofactor biosynthesis; thiamine diphosphate biosynthesis. Its function is as follows. Catalyzes the rearrangement of 1-deoxy-D-xylulose 5-phosphate (DXP) to produce the thiazole phosphate moiety of thiamine. Sulfur is provided by the thiocarboxylate moiety of the carrier protein ThiS. In vitro, sulfur can be provided by H(2)S. In Marinomonas sp. (strain MWYL1), this protein is Thiazole synthase.